Reading from the N-terminus, the 871-residue chain is Alanine--tRNA ligase (871 aa).

Zn(2+)-binding residues include H559, H563, C661, and H665.

It belongs to the class-II aminoacyl-tRNA synthetase family. Zn(2+) serves as cofactor.

It localises to the cytoplasm. It catalyses the reaction tRNA(Ala) + L-alanine + ATP = L-alanyl-tRNA(Ala) + AMP + diphosphate. Its function is as follows. Catalyzes the attachment of alanine to tRNA(Ala) in a two-step reaction: alanine is first activated by ATP to form Ala-AMP and then transferred to the acceptor end of tRNA(Ala). Also edits incorrectly charged Ser-tRNA(Ala) and Gly-tRNA(Ala) via its editing domain. The chain is Alanine--tRNA ligase from Aquifex pyrophilus.